A 487-amino-acid chain; its full sequence is Protein nucleotidyltransferase YdiU (487 aa).

ATP contacts are provided by Gly85, Gly87, Arg88, Lys108, Asp120, Gly121, Arg171, and Arg178. The active-site Proton acceptor is Asp247. The Mg(2+) site is built by Asn248 and Asp257. Asp257 serves as a coordination point for ATP.

It belongs to the SELO family. The cofactor is Mg(2+). Mn(2+) is required as a cofactor.

The enzyme catalyses L-seryl-[protein] + ATP = 3-O-(5'-adenylyl)-L-seryl-[protein] + diphosphate. The catalysed reaction is L-threonyl-[protein] + ATP = 3-O-(5'-adenylyl)-L-threonyl-[protein] + diphosphate. It carries out the reaction L-tyrosyl-[protein] + ATP = O-(5'-adenylyl)-L-tyrosyl-[protein] + diphosphate. It catalyses the reaction L-histidyl-[protein] + UTP = N(tele)-(5'-uridylyl)-L-histidyl-[protein] + diphosphate. The enzyme catalyses L-seryl-[protein] + UTP = O-(5'-uridylyl)-L-seryl-[protein] + diphosphate. The catalysed reaction is L-tyrosyl-[protein] + UTP = O-(5'-uridylyl)-L-tyrosyl-[protein] + diphosphate. Nucleotidyltransferase involved in the post-translational modification of proteins. It can catalyze the addition of adenosine monophosphate (AMP) or uridine monophosphate (UMP) to a protein, resulting in modifications known as AMPylation and UMPylation. The chain is Protein nucleotidyltransferase YdiU from Agrobacterium fabrum (strain C58 / ATCC 33970) (Agrobacterium tumefaciens (strain C58)).